Reading from the N-terminus, the 346-residue chain is Uroporphyrinogen decarboxylase (346 aa).

Substrate contacts are provided by residues 23-27 (RQAGR), Asp-72, Tyr-149, Thr-204, and His-318.

It belongs to the uroporphyrinogen decarboxylase family. In terms of assembly, homodimer.

It is found in the cytoplasm. It catalyses the reaction uroporphyrinogen III + 4 H(+) = coproporphyrinogen III + 4 CO2. It functions in the pathway porphyrin-containing compound metabolism; protoporphyrin-IX biosynthesis; coproporphyrinogen-III from 5-aminolevulinate: step 4/4. Functionally, catalyzes the decarboxylation of four acetate groups of uroporphyrinogen-III to yield coproporphyrinogen-III. The protein is Uroporphyrinogen decarboxylase of Synechococcus sp. (strain JA-2-3B'a(2-13)) (Cyanobacteria bacterium Yellowstone B-Prime).